Consider the following 563-residue polypeptide: Arginine--tRNA ligase (563 aa).

A 'HIGH' region motif is present at residues 122-132 (PNIAKPMSMGH).

This sequence belongs to the class-I aminoacyl-tRNA synthetase family. Monomer.

The protein localises to the cytoplasm. The enzyme catalyses tRNA(Arg) + L-arginine + ATP = L-arginyl-tRNA(Arg) + AMP + diphosphate. In Ligilactobacillus salivarius (strain UCC118) (Lactobacillus salivarius), this protein is Arginine--tRNA ligase.